Reading from the N-terminus, the 201-residue chain is Cytochrome c biogenesis ATP-binding export protein CcmA (201 aa).

The ABC transporter domain maps to 3-200; sequence LIAENLGGER…EGAELRMGVA (198 aa). Residue 35–42 coordinates ATP; it reads GPNGSGKS.

The protein belongs to the ABC transporter superfamily. CcmA exporter (TC 3.A.1.107) family. The complex is composed of two ATP-binding proteins (CcmA) and two transmembrane proteins (CcmB).

Its subcellular location is the cell inner membrane. The catalysed reaction is heme b(in) + ATP + H2O = heme b(out) + ADP + phosphate + H(+). Its function is as follows. Part of the ABC transporter complex CcmAB involved in the biogenesis of c-type cytochromes; once thought to export heme, this seems not to be the case, but its exact role is uncertain. Responsible for energy coupling to the transport system. The polypeptide is Cytochrome c biogenesis ATP-binding export protein CcmA (Mesorhizobium japonicum (strain LMG 29417 / CECT 9101 / MAFF 303099) (Mesorhizobium loti (strain MAFF 303099))).